Consider the following 291-residue polypeptide: Basic helix-loop-helix protein 80 (291 aa).

Residues serine 65 to tyrosine 120 form a disordered region. Residues alanine 80–proline 117 are compositionally biased toward basic and acidic residues. The short motif at alanine 125–aspartate 132 is the Nuclear localization signal element. Residues glutamine 129–arginine 142 are basic motif; degenerate. Residues glutamine 129 to leucine 179 enclose the bHLH domain. Residues glutamate 143–leucine 179 form a helix-loop-helix motif region.

The protein belongs to the bHLH protein family. As to quaternary structure, homodimer. Interacts with IBH1, BC1 and LO9-177.

The protein localises to the nucleus. In terms of biological role, together with BCL2, positive regulator of cell elongation at least partially through increased gibberellic acid (GA) biosynthesis. In Oryza sativa subsp. indica (Rice), this protein is Basic helix-loop-helix protein 80.